Reading from the N-terminus, the 298-residue chain is Cyanophycinase (298 aa).

Catalysis depends on charge relay system residues serine 155, glutamate 173, and histidine 197.

This sequence belongs to the peptidase S51 family.

It catalyses the reaction [L-4-(L-arginin-2-N-yl)aspartate](n) + H2O = [L-4-(L-arginin-2-N-yl)aspartate](n-1) + L-4-(L-arginin-2-N-yl)aspartate. Exopeptidase that catalyzes the hydrolytic cleavage of multi-L-arginyl-poly-L-aspartic acid (cyanophycin; a water-insoluble reserve polymer) into aspartate-arginine dipeptides. The protein is Cyanophycinase (cphB) of Trichormus variabilis (strain ATCC 29413 / PCC 7937) (Anabaena variabilis).